The sequence spans 489 residues: Virion host shutoff protein (489 aa).

Disordered regions lie at residues 110–135 (EEAS…AFSN), 142–161 (SLAS…PSAA), 285–319 (RSQT…ETRV), and 332–364 (GYED…LTPP). Positions 124 to 134 (ITDSRPSSAFS) are enriched in polar residues.

This sequence belongs to the herpesviridae VHS protein family. Interacts with human EIF4H, EIF4A1 and EIF4A2; interaction with eIF4AI and EIF4A2 presumably allows Vhs protein to associate with the eIF4F cap-binding complex.

Its subcellular location is the virion. Minor structural protein that acts as an endoribonuclease during lytic infection. Degrades host mRNAs in the cytoplasm by cutting them at preferred sites, including some in regions of translation initiation. Together with inhibition of host splicing by ICP27, contributes to an overall decrease in host protein synthesis. Also, after the onset of viral transcription, accelerates the turnover of viral mRNA, thereby facilitating the sequential expression of different classes of viral genes. Binds translation initiation factors eIF4H, eIF4AI, and eIF4AII, thereby may interact directly with the translation initiation complex and thus digest specifically mRNAs. Also impedes antigen presentation by major histocompatibility complex class I and class II molecules, inhibits secretion of cytokines that would otherwise recruit lymphocytes and neutrophils cells to the site of infection and blocks the activation of dendritic cells. Plays a role in the inhibition of interferon-beta activation by the cGAS/STING pathway. Mechanistically, down-regulates the expression of host cGAS/MB21D1. Also decreases the accumulation of other interferon-induced mRNAs such as host IFIT3 or CH25H to subvert their antiviral activity. The sequence is that of Virion host shutoff protein (UL41) from Human herpesvirus 1 (strain 17) (HHV-1).